Consider the following 430-residue polypeptide: 3-phosphoshikimate 1-carboxyvinyltransferase (430 aa).

3-phosphoshikimate-binding residues include Lys33, Ser34, and Arg38. Lys33 is a phosphoenolpyruvate binding site. Phosphoenolpyruvate-binding residues include Gly101 and Arg129. Residues Ser172, Ser173, Gln174, Ser201, Glu319, and His346 each coordinate 3-phosphoshikimate. Phosphoenolpyruvate is bound at residue Gln174. The active-site Proton acceptor is Glu319. Arg350, Arg391, and Lys416 together coordinate phosphoenolpyruvate.

This sequence belongs to the EPSP synthase family. Monomer.

It localises to the cytoplasm. It catalyses the reaction 3-phosphoshikimate + phosphoenolpyruvate = 5-O-(1-carboxyvinyl)-3-phosphoshikimate + phosphate. The protein operates within metabolic intermediate biosynthesis; chorismate biosynthesis; chorismate from D-erythrose 4-phosphate and phosphoenolpyruvate: step 6/7. Functionally, catalyzes the transfer of the enolpyruvyl moiety of phosphoenolpyruvate (PEP) to the 5-hydroxyl of shikimate-3-phosphate (S3P) to produce enolpyruvyl shikimate-3-phosphate and inorganic phosphate. The polypeptide is 3-phosphoshikimate 1-carboxyvinyltransferase (Corynebacterium glutamicum (strain ATCC 13032 / DSM 20300 / JCM 1318 / BCRC 11384 / CCUG 27702 / LMG 3730 / NBRC 12168 / NCIMB 10025 / NRRL B-2784 / 534)).